The sequence spans 145 residues: Probable disulfide formation protein (145 aa).

Residues 9 to 28 (ENLLLLIWVQAFLALAGSLF) form a helical membrane-spanning segment. The cysteines at positions 38 and 41 are disulfide-linked. 2 consecutive transmembrane segments (helical) span residues 43–62 (YQRI…AIKK) and 69–86 (PGLF…YHYL). Cysteine 100 and cysteine 106 are oxidised to a cystine. A helical transmembrane segment spans residues 115 to 137 (GFISIPFMAGVAFLIIFVLHLLI).

The protein belongs to the DsbB family. BdbC subfamily.

It is found in the cell membrane. Required for disulfide bond formation in some proteins. The sequence is that of Probable disulfide formation protein from Oceanobacillus iheyensis (strain DSM 14371 / CIP 107618 / JCM 11309 / KCTC 3954 / HTE831).